Reading from the N-terminus, the 171-residue chain is Ribosome maturation factor RimM (171 aa).

Residues 96-170 (AEGEYYYHEI…LVTIHVMEGL (75 aa)) enclose the PRC barrel domain.

The protein belongs to the RimM family. As to quaternary structure, binds ribosomal protein uS19.

The protein resides in the cytoplasm. In terms of biological role, an accessory protein needed during the final step in the assembly of 30S ribosomal subunit, possibly for assembly of the head region. Essential for efficient processing of 16S rRNA. May be needed both before and after RbfA during the maturation of 16S rRNA. It has affinity for free ribosomal 30S subunits but not for 70S ribosomes. In Bacillus mycoides (strain KBAB4) (Bacillus weihenstephanensis), this protein is Ribosome maturation factor RimM.